We begin with the raw amino-acid sequence, 330 residues long: Ketol-acid reductoisomerase (NADP(+)) (330 aa).

Positions 1-181 (MKVYYEQDAT…GGARSGVIET (181 aa)) constitute a KARI N-terminal Rossmann domain. NADP(+)-binding positions include 24–27 (YGSQ), Arg-47, and 82–85 (DQVQ). Residue His-107 is part of the active site. Gly-133 is an NADP(+) binding site. The KARI C-terminal knotted domain maps to 182-327 (TFKEETETDL…GKLRGMMPWL (146 aa)). Asp-190, Glu-194, Glu-226, and Glu-230 together coordinate Mg(2+). Ser-251 contributes to the substrate binding site.

Belongs to the ketol-acid reductoisomerase family. It depends on Mg(2+) as a cofactor.

The enzyme catalyses (2R)-2,3-dihydroxy-3-methylbutanoate + NADP(+) = (2S)-2-acetolactate + NADPH + H(+). It carries out the reaction (2R,3R)-2,3-dihydroxy-3-methylpentanoate + NADP(+) = (S)-2-ethyl-2-hydroxy-3-oxobutanoate + NADPH + H(+). Its pathway is amino-acid biosynthesis; L-isoleucine biosynthesis; L-isoleucine from 2-oxobutanoate: step 2/4. It participates in amino-acid biosynthesis; L-valine biosynthesis; L-valine from pyruvate: step 2/4. Its function is as follows. Involved in the biosynthesis of branched-chain amino acids (BCAA). Catalyzes an alkyl-migration followed by a ketol-acid reduction of (S)-2-acetolactate (S2AL) to yield (R)-2,3-dihydroxy-isovalerate. In the isomerase reaction, S2AL is rearranged via a Mg-dependent methyl migration to produce 3-hydroxy-3-methyl-2-ketobutyrate (HMKB). In the reductase reaction, this 2-ketoacid undergoes a metal-dependent reduction by NADPH to yield (R)-2,3-dihydroxy-isovalerate. The chain is Ketol-acid reductoisomerase (NADP(+)) from Nitratidesulfovibrio vulgaris (strain DSM 19637 / Miyazaki F) (Desulfovibrio vulgaris).